A 1426-amino-acid polypeptide reads, in one-letter code: DNA-directed RNA polymerase subunit beta' (1426 aa).

Zn(2+) is bound by residues Cys-71, Cys-73, Cys-86, and Cys-89. The Mg(2+) site is built by Asp-461, Asp-463, and Asp-465. Zn(2+) contacts are provided by Cys-814, Cys-888, Cys-895, and Cys-898. A disordered region spans residues 1392 to 1426; it reads ADPIAAAESAIGLGGGEQPATSETGAGGSDPSEEG.

The protein belongs to the RNA polymerase beta' chain family. In terms of assembly, the RNAP catalytic core consists of 2 alpha, 1 beta, 1 beta' and 1 omega subunit. When a sigma factor is associated with the core the holoenzyme is formed, which can initiate transcription. It depends on Mg(2+) as a cofactor. Zn(2+) serves as cofactor.

It carries out the reaction RNA(n) + a ribonucleoside 5'-triphosphate = RNA(n+1) + diphosphate. Functionally, DNA-dependent RNA polymerase catalyzes the transcription of DNA into RNA using the four ribonucleoside triphosphates as substrates. The chain is DNA-directed RNA polymerase subunit beta' from Alkalilimnicola ehrlichii (strain ATCC BAA-1101 / DSM 17681 / MLHE-1).